The chain runs to 499 residues: CD-NTase-associated protein 4 (499 aa).

An N-terminal endonuclease domain region spans residues 1–226 (MATSVLANWH…DFRFDGAARA (226 aa)). Residues Asp49 and Gln72 contribute to the active site. Asp49 lines the Mg(2+) pocket. Ile73 provides a ligand contact to Mg(2+). Lys74 is a catalytic residue. The C-terminal SAVED domain stretch occupies residues 258–464 (FRNVALRSFS…HIFSAAPNAV (207 aa)).

Belongs to the Cap4 nuclease family. As to quaternary structure, a monomer in the absence of ligand, in its presence it forms oligomers. Mg(2+) is required as a cofactor.

Its activity is regulated as follows. DNase activity is activated upon ligand binding (cAAG). Inhibited by EDTA. Functionally, effector DNase of a CBASS antivirus system. CBASS (cyclic oligonucleotide-based antiphage signaling system) provides immunity against bacteriophages. The CD-NTase protein (CdnD) synthesizes cyclic nucleotides in response to infection; these serve as specific second messenger signals. The signals activate a diverse range of effectors, leading to bacterial cell death and thus abortive phage infection. A type II-C(AAG) CBASS system. Binds second messenger 3',3',3'-cyclic AMP-AMP-GMP (cAAG). In the presence of cAAG (synthesized by the cognate CD-NTase protein in the CBASS operon), endonucleolytically degrades dsDNA to approximately 17 bp length fragments, with a preference for 5'-C|NG sites. Only binds DNA in the presence of cAAG. Not activated by c-di-AMP, c-di-GMP, 3',3'-cyclic GMP-AMP (cGAMP) or the second messenger of A.baumanii strain ATCC 27244. In terms of biological role, protects E.coli against phage T2 infection. When the cdnD-cap2-cap3-cap4 operon is introduced in E.coli there is a more than 10(3) decrease in the efficiency of T2 plaque formation. The operon does not protect against phage T5 and only about 10-fold against T7. Expression of cdnD-cap4 alone protects E.coli against phage T2 infection. The polypeptide is CD-NTase-associated protein 4 (Enterobacter hormaechei subsp. hoffmannii (strain UCI 50)).